Consider the following 237-residue polypeptide: Lectin alpha chain (237 aa).

2 residues coordinate Mn(2+): Glu-8 and Asp-10. Ca(2+)-binding residues include Asp-10, Tyr-12, Asn-14, and Asp-19. Residues Tyr-12 and Asn-14 each coordinate a carbohydrate. 2 residues coordinate Mn(2+): Asp-19 and His-24. 99–100 (LY) serves as a coordination point for a carbohydrate. Residue Asp-208 participates in Ca(2+) binding. Position 228 (Arg-228) interacts with a carbohydrate.

Belongs to the leguminous lectin family. In terms of assembly, homodimer and homotetramer. Oligomerization is pH-dependent with homotetramers forming at pH 4 and above.

In terms of biological role, D-mannose/D-glucose-binding lectin. Has anti-inflammatory activity in animal models when applied intravenously. Has antinociceptive activity in mice when applied intravenously. The chain is Lectin alpha chain from Canavalia boliviana.